We begin with the raw amino-acid sequence, 247 residues long: Membrane-embedded CAAX protease MroQ (247 aa).

A signal peptide spans 1–17; it reads MTRLWASLLTVIIYILS. The next 3 helical transmembrane spans lie at 42–62, 81–101, and 119–139; these read VIYI…LINL, IIPW…VVSI, and LIII…IGPL. Residue Glu-141 is part of the active site. The next 2 membrane-spanning stretches (helical) occupy residues 162–182 and 183–203; these read IVAF…AHND and FKFI…YVWT.

This sequence belongs to the peptidase U48 family.

It is found in the membrane. Participates in the regulation of the Agr quorum sensing activity and plays thereby an important role in virulence. Mechanistically, elicits a protease dependent control of Agr activity without playing a role in the processing of the pheromone-precursor AgrD. The sequence is that of Membrane-embedded CAAX protease MroQ (mroQ) from Staphylococcus aureus (strain USA300).